The chain runs to 135 residues: Large ribosomal subunit protein uL16 (135 aa).

Belongs to the universal ribosomal protein uL16 family. As to quaternary structure, part of the 50S ribosomal subunit.

Its function is as follows. Binds 23S rRNA and is also seen to make contacts with the A and possibly P site tRNAs. This chain is Large ribosomal subunit protein uL16, found in Desulforapulum autotrophicum (strain ATCC 43914 / DSM 3382 / VKM B-1955 / HRM2) (Desulfobacterium autotrophicum).